A 590-amino-acid polypeptide reads, in one-letter code: Fucose-1-phosphate guanylyltransferase (590 aa).

Expressed at highest levels in brain, moderately in testis, ovary and kidney, and weakly in liver, spleen, heart and lung.

It localises to the cytoplasm. It carries out the reaction beta-L-fucose 1-phosphate + GTP + H(+) = GDP-beta-L-fucose + diphosphate. Functionally, catalyzes the formation of GDP-L-fucose from GTP and L-fucose-1-phosphate. Functions as a salvage pathway to reutilize L-fucose arising from the turnover of glycoproteins and glycolipids. This Mus musculus (Mouse) protein is Fucose-1-phosphate guanylyltransferase.